The chain runs to 437 residues: Adenylosuccinate synthetase (437 aa).

Residues 12–18 (GDEGKGK) and 40–42 (GHT) contribute to the GTP site. The active-site Proton acceptor is the Asp13. Residues Asp13 and Gly40 each contribute to the Mg(2+) site. IMP contacts are provided by residues 13–16 (DEGK), 38–41 (NAGH), Thr128, Arg142, Gln223, Thr238, and Arg302. The Proton donor role is filled by His41. Substrate is bound at residue 298 to 304 (TTTGRRR). GTP-binding positions include Arg304, 330–332 (KLD), and 412–414 (SLG).

The protein belongs to the adenylosuccinate synthetase family. As to quaternary structure, homodimer. Mg(2+) is required as a cofactor.

Its subcellular location is the cytoplasm. The enzyme catalyses IMP + L-aspartate + GTP = N(6)-(1,2-dicarboxyethyl)-AMP + GDP + phosphate + 2 H(+). Its pathway is purine metabolism; AMP biosynthesis via de novo pathway; AMP from IMP: step 1/2. Its function is as follows. Plays an important role in the de novo pathway of purine nucleotide biosynthesis. Catalyzes the first committed step in the biosynthesis of AMP from IMP. The protein is Adenylosuccinate synthetase of Synechococcus sp. (strain CC9311).